The sequence spans 227 residues: Pyridoxal 5'-phosphate synthase subunit PdxT (227 aa).

52–54 (GES) is a binding site for L-glutamine. The active-site Nucleophile is Cys-84. L-glutamine-binding positions include Arg-118 and 149–150 (IR). Catalysis depends on charge relay system residues His-189 and Glu-191.

Belongs to the glutaminase PdxT/SNO family. As to quaternary structure, in the presence of PdxS, forms a dodecamer of heterodimers. Only shows activity in the heterodimer.

The catalysed reaction is aldehydo-D-ribose 5-phosphate + D-glyceraldehyde 3-phosphate + L-glutamine = pyridoxal 5'-phosphate + L-glutamate + phosphate + 3 H2O + H(+). The enzyme catalyses L-glutamine + H2O = L-glutamate + NH4(+). The protein operates within cofactor biosynthesis; pyridoxal 5'-phosphate biosynthesis. Catalyzes the hydrolysis of glutamine to glutamate and ammonia as part of the biosynthesis of pyridoxal 5'-phosphate. The resulting ammonia molecule is channeled to the active site of PdxS. The polypeptide is Pyridoxal 5'-phosphate synthase subunit PdxT (Renibacterium salmoninarum (strain ATCC 33209 / DSM 20767 / JCM 11484 / NBRC 15589 / NCIMB 2235)).